The chain runs to 241 residues: Neuroendocrine secretory protein 55 (241 aa).

A signal peptide spans 1–46 (MDRRSRPQLGRRARHNYNDLCPPIGRRAATALLWLSCSIALLRALA). Residues 71–241 (AAQVFPEPPE…KRGAIPIRRH (171 aa)) form a disordered region. Residues 97-125 (EYQEEEFDYESETESESEIESETEFETES) show a composition bias toward acidic residues. Low complexity predominate over residues 167–177 (PDASPSRAPPS). The segment covering 182 to 198 (ESPRQGEEPEDKDPRDP) has biased composition (basic and acidic residues). Positions 212–221 (QHRCKPKKPT) are enriched in basic residues.

It belongs to the NESP55 family. Binds keratan sulfate chains. Post-translationally, may be proteolytically processed to give rise to a number of active peptides. In terms of tissue distribution, highly expressed in adrenal medulla and anterior and posterior pituitary. In the brain, detected in hypothalamus, hippocampus, caudate nucleus, thalamus and, in significantly lower amounts, in the cerebellum.

It is found in the cytoplasmic vesicle. Its subcellular location is the secretory vesicle. It localises to the secreted. The protein is Neuroendocrine secretory protein 55 of Bos taurus (Bovine).